The chain runs to 898 residues: Translation initiation factor IF-2 (898 aa).

Disordered stretches follow at residues 51 to 70 (RKSH…LKRK) and 114 to 303 (LAAE…KQHG). Basic and acidic residues-rich tracts occupy residues 114–171 (LAAE…EKSK) and 184–258 (PAKE…DDKG). The tr-type G domain maps to 398-567 (HRAPVVTIMG…LLQSELLELQ (170 aa)). Residues 407–414 (GHVDHGKT) form a G1 region. A GTP-binding site is contributed by 407–414 (GHVDHGKT). A G2 region spans residues 432–436 (GITQH). A G3 region spans residues 453–456 (DTPG). Residues 453-457 (DTPGH) and 507-510 (NKID) each bind GTP. The tract at residues 507–510 (NKID) is G4. Positions 543–545 (SAH) are G5.

The protein belongs to the TRAFAC class translation factor GTPase superfamily. Classic translation factor GTPase family. IF-2 subfamily.

The protein resides in the cytoplasm. One of the essential components for the initiation of protein synthesis. Protects formylmethionyl-tRNA from spontaneous hydrolysis and promotes its binding to the 30S ribosomal subunits. Also involved in the hydrolysis of GTP during the formation of the 70S ribosomal complex. The polypeptide is Translation initiation factor IF-2 (Alcanivorax borkumensis (strain ATCC 700651 / DSM 11573 / NCIMB 13689 / SK2)).